We begin with the raw amino-acid sequence, 673 residues long: Cell division cycle protein 23 homolog (673 aa).

TPR repeat units follow at residues 86-120, 159-195, 232-267, 332-365, 400-433, 434-467, 469-501, 502-535, 539-572, and 577-610; these read AEMW…VLDN, NKEF…YQEH, EDVW…EPRI, PMII…DPYR, WETC…NPGL, AALW…DPAD, RGWY…KPHD, SRLL…GDVE, LWSL…VTSA, and IYAI…ETLC. A disordered region spans residues 628–673; sequence SRLPVEEAPGPSNASAAGGQEAMDTEEAPQEGGEEEMSEGEDDFSF. Low complexity predominate over residues 635–646; that stretch reads APGPSNASAAGG. Acidic residues predominate over residues 650–673; the sequence is MDTEEAPQEGGEEEMSEGEDDFSF.

The protein belongs to the APC8/CDC23 family. In terms of assembly, the APC/C complex is probably composed of at least 12 subunits: apc-2, apc-10, apc-11, cdc-26, emb-1, emb-27, emb-30, mat-1, mat-2, mat-3, such-1 and gfi-3.

It functions in the pathway protein modification; protein ubiquitination. Its function is as follows. Probable component of the anaphase promoting complex/cyclosome (APC/C), a cell cycle-regulated E3 ubiquitin ligase that controls progression through mitosis and the G1 phase of the cell cycle. The APC/C complex acts by mediating ubiquitination and subsequent degradation of target proteins. Developmental role in early embryogenesis and the metaphase to anaphase transition in oocyte and spermatocyte meiosis and mitosis in germ cells. Required for embryonic anterior-posterior axis formation. Plays a role in regulating the abundance of glr-1 receptors in postmitotic neurons, which may in turn control animal locomotion. Involved in regulating GABA neurotransmitter release at neuromuscular junctions in GABA motor neurons. The polypeptide is Cell division cycle protein 23 homolog (Caenorhabditis elegans).